Here is a 2368-residue protein sequence, read N- to C-terminus: Highly reducing polyketide synthase cla2 (2368 aa).

The region spanning 10–434 (QIPIAIVGLG…GTNGLVVLEA (425 aa)) is the Ketosynthase family 3 (KS3) domain. Catalysis depends on for beta-ketoacyl synthase activity residues Cys182, His317, and His357. The malonyl-CoA:ACP transacylase (MAT) domain stretch occupies residues 548–877 (FVFTGQGAQW…RGQNALDTSL (330 aa)). The For malonyltransferase activity role is filled by Ser638. The N-terminal hotdog fold stretch occupies residues 936–1071 (HSMIGLKQPM…GLVAIEYTNK (136 aa)). Residues 936–1175 (HSMIGLKQPM…AIFQSIFGST (240 aa)) form a dehydratase (DH) domain region. The PKS/mFAS DH domain maps to 936–1255 (HSMIGLKQPM…MTEPEVGDDA (320 aa)). Catalysis depends on His968, which acts as the Proton acceptor; for dehydratase activity. Positions 1099–1255 (PLMIRREKFY…MTEPEVGDDA (157 aa)) are C-terminal hotdog fold. The active-site Proton donor; for dehydratase activity is Asp1165. The tract at residues 1655–1967 (GFLDSLQFIK…QGKHRGKLVL (313 aa)) is enoylreductase (ER) domain. Residues 1991–2170 (ATYLIIGGLG…AVAVNLTIIR (180 aa)) are catalytic ketoreductase (KRc) domain. The Carrier domain occupies 2283–2360 (QASEIITEGL…VLAKTIASRS (78 aa)). O-(pantetheine 4'-phosphoryl)serine is present on Ser2320.

It functions in the pathway secondary metabolite biosynthesis. Functionally, highly reducing polyketide synthase; part of the gene cluster that mediates the biosynthesis of cladosporin, a tricyclic octaketide that acts as an antimalarial agent though inhibition of the Plasmodium falciparum lysyl-tRNA synthetase. The highly reducing polyketide synthase cla2 is responsible for biosynthesis up to the pentaketide stage, including of the tetrahydropyran (THP) ring, whereas the three subsequent ketide extensions with no reduction are catalyzed by the non-reducing polyketide synthase cla3. The polypeptide is Highly reducing polyketide synthase cla2 (Cladosporium cladosporioides).